We begin with the raw amino-acid sequence, 319 residues long: Ribonucleoside-diphosphate reductase small chain (319 aa).

Residues 313 to 319 (FSLDVDF) form an interaction with R1 region.

Belongs to the ribonucleoside diphosphate reductase small chain family. In terms of assembly, interacts with RNR1/OPG080 subunit. Can interact with host RNR1 supunit. The cofactor is Fe cation.

It catalyses the reaction a 2'-deoxyribonucleoside 5'-diphosphate + [thioredoxin]-disulfide + H2O = a ribonucleoside 5'-diphosphate + [thioredoxin]-dithiol. In terms of biological role, ribonucleoside-diphosphate reductase holoenzyme provides the precursors necessary for viral DNA synthesis. Allows virus growth in non-dividing cells. Catalyzes the biosynthesis of deoxyribonucleotides from the corresponding ribonucleotides. In Cynomys gunnisoni (Gunnison's prairie dog), this protein is Ribonucleoside-diphosphate reductase small chain (OPG048).